A 274-amino-acid chain; its full sequence is Anamorsin homolog (274 aa).

Positions 1 to 154 (MDRTRKQCSV…KKPSWKIGSS (154 aa)) are N-terminal SAM-like domain. The interval 154-185 (SFALKKSTKGSVKVNLDDDLIDEDSLLTEEDM) is linker. Residues cysteine 196, cysteine 205, cysteine 208, and cysteine 210 each coordinate [2Fe-2S] cluster. Positions 196–210 (CEVGSTRKACKNCTC) are fe-S binding site A. 4 residues coordinate [4Fe-4S] cluster: cysteine 235, cysteine 238, cysteine 246, and cysteine 249. Short sequence motifs (cx2C motif) lie at residues 235–238 (CGSC) and 246–249 (CSTC). The tract at residues 235–249 (CGSCGLGDAFRCSTC) is fe-S binding site B.

It belongs to the anamorsin family. As to quaternary structure, monomer. [2Fe-2S] cluster is required as a cofactor. Requires [4Fe-4S] cluster as cofactor.

The protein resides in the cytoplasm. The protein localises to the mitochondrion intermembrane space. Component of the cytosolic iron-sulfur (Fe-S) protein assembly (CIA) machinery. Required for the maturation of extramitochondrial Fe-S proteins. Part of an electron transfer chain functioning in an early step of cytosolic Fe-S biogenesis, facilitating the de novo assembly of a [4Fe-4S] cluster on the cytosolic Fe-S scaffold complex. Electrons are transferred from NADPH via a FAD- and FMN-containing diflavin oxidoreductase. Together with the diflavin oxidoreductase, also required for the assembly of the diferric tyrosyl radical cofactor of ribonucleotide reductase (RNR), probably by providing electrons for reduction during radical cofactor maturation in the catalytic small subunit. The protein is Anamorsin homolog of Ricinus communis (Castor bean).